We begin with the raw amino-acid sequence, 68 residues long: Conotoxin phi-MiXXVIIB (68 aa).

The N-terminal stretch at 1-29 (MRFFFLLLTVALFLTSITGDDAERMLGMK) is a signal peptide. A propeptide spanning residues 30-35 (EGGYVR) is cleaved from the precursor. Disulfide bonds link C38–C49, C42–C51, C45–C56, and C50–C61. P44 carries the 4-hydroxyproline modification.

This sequence belongs to the conotoxin G2 superfamily. 1 family. Expressed by the venom duct.

It is found in the secreted. Functionally, this peptide promotes cell proliferation (EC(50)=17.85 uM) and inhibits apoptosis (EC(50)=2.2 uM). This chain is Conotoxin phi-MiXXVIIB, found in Conus miles (Soldier cone).